The following is a 626-amino-acid chain: ATP-dependent RNA helicase dbp-8 (626 aa).

Positions 1-25 (MPSATAAKAKKANANANLKSKVNKA) are enriched in low complexity. Positions 1–183 (MPSATAAKAK…ATPALPVPEP (183 aa)) are disordered. Residues 40 to 98 (DESDFGSELDVEDESAASDEEDEDEDEDEHDLEEGVSDEGEGVSDEEEGVSDEDEDEEN) show a composition bias toward acidic residues. Basic and acidic residues predominate over residues 161 to 173 (KQAEAPKTEKTEE). Residues 195 to 223 (TTFDALNVRPWLVQSLANMAIKRPTGIQK) carry the Q motif motif. In terms of domain architecture, Helicase ATP-binding spans 226-406 (IPEILKGRDC…ERPPIPGRAP (181 aa)). Position 239–246 (239–246 (SRTGSGKT)) interacts with ATP. The DEAD box signature appears at 348–351 (DEAD). The region spanning 438–589 (YLHMFLLTPQ…GVNLETRVIR (152 aa)) is the Helicase C-terminal domain.

The protein belongs to the DEAD box helicase family. DDX49/DBP8 subfamily.

The protein localises to the nucleus. It is found in the nucleolus. It catalyses the reaction ATP + H2O = ADP + phosphate + H(+). Functionally, ATP-binding RNA helicase involved in 40S ribosomal subunit biogenesis and is required for the normal formation of 18S rRNAs through pre-rRNA processing at A0, A1 and A2 sites. Required for vegetative growth. The chain is ATP-dependent RNA helicase dbp-8 (dbp-8) from Neurospora crassa (strain ATCC 24698 / 74-OR23-1A / CBS 708.71 / DSM 1257 / FGSC 987).